The sequence spans 68 residues: MDKVVKFAEPGRAFAKDSIRLVKRCTKPDRKEFQKIAIATAVGFAIMGFIGFFVKLIHIPINNIIVGS.

Residues 1 to 32 (MDKVVKFAEPGRAFAKDSIRLVKRCTKPDRKE) are Cytoplasmic-facing. The helical transmembrane segment at 33–61 (FQKIAIATAVGFAIMGFIGFFVKLIHIPI) threads the bilayer. Topologically, residues 62-68 (NNIIVGS) are extracellular.

Belongs to the SecE/SEC61-gamma family. In terms of assembly, heterotrimeric complex composed of SEC61-alpha, SEC61-beta and SEC61-gamma.

Its subcellular location is the endoplasmic reticulum membrane. Its function is as follows. Necessary for protein translocation in the endoplasmic reticulum. The protein is Protein transport protein Sec61 gamma-1 subunit (SEC61G1) of Drosophila melanogaster (Fruit fly).